The sequence spans 1700 residues: Probable serine/threonine-protein kinase ifkC (1700 aa).

A disordered region spans residues 1-25 (MPPKPKQKAKQPSQQPPPPPPPAAA). Pro residues predominate over residues 14–23 (QQPPPPPPPA). The RWD domain maps to 74 to 197 (MELEALQAIF…EIAKDFLNEN (124 aa)). Polar residues predominate over residues 454–463 (GLKKSPSTFE). Residues 454–488 (GLKKSPSTFEYSGEGGGGGVGGGSSQKTINPHQQS) form a disordered region. Gly residues predominate over residues 466–477 (GEGGGGGVGGGS). Polar residues predominate over residues 479-488 (QKTINPHQQS). Residues 494–1027 (FEEIQLLGRG…AQQLLQSELM (534 aa)) form the Protein kinase domain. ATP contacts are provided by residues 500–508 (LGRGGFGQV) and K523. 2 disordered regions span residues 568–639 (LTND…ENND) and 689–760 (GNNT…SSSK). The span at 572–639 (NSDDDDDDDD…SEFESEENND (68 aa)) shows a compositional bias: acidic residues. A compositionally biased stretch (low complexity) spans 697–735 (SSNQHLQQQQQQNQSQQQKKQPQQNQSQQQKKLKNSNSK). Residues 736 to 752 (SKSKSKSKSKSKSKSNS) are compositionally biased toward basic residues. Residue D822 is the Proton acceptor of the active site. Composition is skewed to low complexity over residues 850 to 875 (TSTL…SSNS), 1135 to 1158 (NNSS…NTNS), 1230 to 1240 (SSNGNSNNNNS), and 1509 to 1531 (NNSN…SYNN). Disordered regions lie at residues 850–901 (TSTL…EVEG), 1134–1160 (FNNS…NSVV), 1216–1253 (KHHH…SNTT), and 1507–1531 (NLNN…SYNN).

This sequence belongs to the protein kinase superfamily. Ser/Thr protein kinase family. GCN2 subfamily.

It catalyses the reaction L-seryl-[protein] + ATP = O-phospho-L-seryl-[protein] + ADP + H(+). The enzyme catalyses L-threonyl-[protein] + ATP = O-phospho-L-threonyl-[protein] + ADP + H(+). The chain is Probable serine/threonine-protein kinase ifkC (ifkC) from Dictyostelium discoideum (Social amoeba).